The chain runs to 391 residues: MKESIFSKKRILLLGSGELGKELVIESKRLGLEVIAIDRYEKAPAMQVADYSRVIEMGDKNILKNVIKEFKPDYVVPEIEALSIEALKELEDEGFNIVPNARTVEITMNRDKIRDLASKDLKIKTAKFDYIFEFDDLEKKADEIGFPLLLKPLMSSSGKGQSLVETKNDLQNAWKQAQANSRGKVKGVIIEEFINFDFEFTLLTVRKENGENIFCLPIGHLQSNGDYQCSWQPLEIKESLIIEAKRMTSRILNNLNGAGLYGVEFFIKGSEVIFSELSPRPHDTGMVTLVSQNINEFELHLRAFLNLPIPRIDLIEPSATRVILSNQEYLNPIYEGLYEALEFEKTKVLIFGKPVSRKGRRMGVVLSSNTDINLARKNADEAALKIKVSTT.

N(1)-(5-phospho-beta-D-ribosyl)glycinamide contacts are provided by residues 18–19 (EL) and Glu-78. Residues Arg-110, Lys-151, 156 to 161 (SSGKGQ), 191 to 194 (EEFI), and Glu-199 contribute to the ATP site. Residues 115-305 (DLASKDLKIK…EFELHLRAFL (191 aa)) form the ATP-grasp domain. Residues Glu-264 and Glu-276 each coordinate Mg(2+). Residues Asp-283, Lys-353, and 360-361 (RR) each bind N(1)-(5-phospho-beta-D-ribosyl)glycinamide.

It belongs to the PurK/PurT family. As to quaternary structure, homodimer.

It catalyses the reaction N(1)-(5-phospho-beta-D-ribosyl)glycinamide + formate + ATP = N(2)-formyl-N(1)-(5-phospho-beta-D-ribosyl)glycinamide + ADP + phosphate + H(+). Its pathway is purine metabolism; IMP biosynthesis via de novo pathway; N(2)-formyl-N(1)-(5-phospho-D-ribosyl)glycinamide from N(1)-(5-phospho-D-ribosyl)glycinamide (formate route): step 1/1. Its function is as follows. Involved in the de novo purine biosynthesis. Catalyzes the transfer of formate to 5-phospho-ribosyl-glycinamide (GAR), producing 5-phospho-ribosyl-N-formylglycinamide (FGAR). Formate is provided by PurU via hydrolysis of 10-formyl-tetrahydrofolate. The chain is Formate-dependent phosphoribosylglycinamide formyltransferase from Prochlorococcus marinus (strain AS9601).